A 175-amino-acid chain; its full sequence is Capsid protein (175 aa).

The disordered stretch occupies residues 1 to 35 (MFRQEMARYPKKSIKKRRVGRRKYGSKAATSHDYS). Positions 9-25 (YPKKSIKKRRVGRRKYG) are enriched in basic residues.

Belongs to the nanoviridae capsid protein family.

The protein resides in the virion. The polypeptide is Capsid protein (DNA-S) (Musa (BBTV)).